Reading from the N-terminus, the 911-residue chain is Nitrate reductase [NADH], clone PBNBR1405 (911 aa).

The interval 1-68 is disordered; the sequence is MATSVDNRHY…RFDSSDDEDE (68 aa). The segment covering 49–62 has biased composition (basic and acidic residues); sequence KSVDKTTKEDRFDS. Cys-191 is a Mo-molybdopterin binding site. The region spanning 539 to 614 is the Cytochrome b5 heme-binding domain; that stretch reads SKMYSMSEVR…LEDYRIGELI (76 aa). Positions 574 and 597 each coordinate heme. Residues 654–766 enclose the FAD-binding FR-type domain; it reads REKVPVKLIE…KGPLGHIEYQ (113 aa). FAD contacts are provided by residues 706–709, 723–727, Phe-728, Phe-735, 740–742, and Thr-793; these read RAYT, VIKVY, and LMS.

The protein belongs to the nitrate reductase family. Homodimer. Requires FAD as cofactor. Heme serves as cofactor. The cofactor is Mo-molybdopterin.

It carries out the reaction nitrite + NAD(+) + H2O = nitrate + NADH + H(+). In terms of biological role, nitrate reductase is a key enzyme involved in the first step of nitrate assimilation in plants, fungi and bacteria. The polypeptide is Nitrate reductase [NADH], clone PBNBR1405 (NIA1) (Brassica napus (Rape)).